Here is a 482-residue protein sequence, read N- to C-terminus: Cilia- and flagella-associated protein 53 (482 aa).

Coiled-coil stretches lie at residues 9-40 (DARI…AVAE), 67-124 (ADLN…QALA), and 152-413 (IEER…AKDA). The segment at 462 to 482 (VNQTLSSTDPPVWHGRRKFDW) is disordered.

The protein belongs to the CFAP53 family.

The protein localises to the cell projection. It localises to the cilium. The protein resides in the flagellum. May play a role in filopodium movement. The sequence is that of Cilia- and flagella-associated protein 53 from Chlamydomonas reinhardtii (Chlamydomonas smithii).